The primary structure comprises 104 residues: Circadian clock oscillator protein KaiB (104 aa).

This sequence belongs to the KaiB family. As to quaternary structure, the KaiABC complex composition changes during the circadian cycle to control KaiC phosphorylation. Complexes KaiC(6), KaiA(2-4):KaiC(6), KaiB(6):KaiC(6) and KaiC(6):KaiB(6):KaiA(12) are among the most important forms, many form cooperatively. Undergoes a major conformational rearrangment; in the free state forms homotetramers as a dimer of dimers. When bound to the CI domain of KaiC switches to a monomeric thioredoxin-fold (KaiB(fs)). KaiB(fs) binds CikA, leading it to dephosphorylate phospho-RpaA.

Key component of the KaiABC oscillator complex, which constitutes the main circadian regulator in cyanobacteria. Complex composition changes during the circadian cycle to control KaiC phosphorylation. KaiA stimulates KaiC autophosphorylation, while KaiB sequesters KaiA, leading to KaiC autodephosphorylation. Phospho-Ser-431 KaiC accumulation triggers binding of KaiB to form the KaiB(6):KaiC(6) complex, leading to changes in output regulators CikA and SasA. KaiB switches to a thioredoxin-like fold (KaiB(fs)) when bound to KaiC. KaiB(6):KaiC(6) formation exposes a site for KaiA binding that sequesters KaiA from KaiC, making the KaiC(6):KaiB(6):KaiA(12) complex that results in KaiC autodephosphorylation. Functionally, a metamorphic protein which reversibly switches between an inactive tetrameric fold and a rare, thioredoxin-like monomeric fold (KaiB(fs)). KaiB(fs) binds phospho-KaiC, KaiA and CikA. KaiA and CikA compete for binding to KaiB(fs), and KaiB(fs) and SasA compete for binding to KaiC, thus the clock oscillator and output signal pathway are tightly coupled. In Rippkaea orientalis (strain PCC 8801 / RF-1) (Cyanothece sp. (strain PCC 8801)), this protein is Circadian clock oscillator protein KaiB.